The chain runs to 364 residues: Dual-specificity RNA methyltransferase RlmN (364 aa).

E91 functions as the Proton acceptor in the catalytic mechanism. One can recognise a Radical SAM core domain in the interval 97–333; sequence ESDRGTLCIS…VTVRKTRGDD (237 aa). Residues C104 and C338 are joined by a disulfide bond. Residues C111, C115, and C118 each coordinate [4Fe-4S] cluster. S-adenosyl-L-methionine is bound by residues 164–165, S196, 218–220, and N295; these read GE and SLH. C338 serves as the catalytic S-methylcysteine intermediate.

It belongs to the radical SAM superfamily. RlmN family. Requires [4Fe-4S] cluster as cofactor.

It localises to the cytoplasm. It catalyses the reaction adenosine(2503) in 23S rRNA + 2 reduced [2Fe-2S]-[ferredoxin] + 2 S-adenosyl-L-methionine = 2-methyladenosine(2503) in 23S rRNA + 5'-deoxyadenosine + L-methionine + 2 oxidized [2Fe-2S]-[ferredoxin] + S-adenosyl-L-homocysteine. The enzyme catalyses adenosine(37) in tRNA + 2 reduced [2Fe-2S]-[ferredoxin] + 2 S-adenosyl-L-methionine = 2-methyladenosine(37) in tRNA + 5'-deoxyadenosine + L-methionine + 2 oxidized [2Fe-2S]-[ferredoxin] + S-adenosyl-L-homocysteine. Its function is as follows. Specifically methylates position 2 of adenine 2503 in 23S rRNA and position 2 of adenine 37 in tRNAs. m2A2503 modification seems to play a crucial role in the proofreading step occurring at the peptidyl transferase center and thus would serve to optimize ribosomal fidelity. This chain is Dual-specificity RNA methyltransferase RlmN, found in Neisseria gonorrhoeae (strain ATCC 700825 / FA 1090).